A 358-amino-acid polypeptide reads, in one-letter code: B3 domain-containing protein Os12g0592300 (358 aa).

The TF-B3 1 DNA-binding region spans 25–122 (RIRFFRLMTG…SFDVLIFDAS (98 aa)). A disordered region spans residues 148-215 (YHLSDSEDTS…EKSDDDDEHA (68 aa)). A compositionally biased stretch (polar residues) spans 156 to 181 (TSTPSTFLVGSPHKASTSKKLNGKTK). The span at 203 to 215 (IEEEKSDDDDEHA) shows a compositional bias: acidic residues. Residues 252-350 (FVTVLQAPQI…TMTVHVIGKV (99 aa)) constitute a DNA-binding region (TF-B3 2).

The protein resides in the nucleus. In Oryza sativa subsp. japonica (Rice), this protein is B3 domain-containing protein Os12g0592300.